The chain runs to 106 residues: Small ribosomal subunit protein bS16 (106 aa).

It belongs to the bacterial ribosomal protein bS16 family.

The protein is Small ribosomal subunit protein bS16 of Protochlamydia amoebophila (strain UWE25).